The primary structure comprises 54 residues: Relaxin (54 aa).

At Gln1 the chain carries Pyrrolidone carboxylic acid. 3 disulfide bridges follow: Cys10–Cys41, Cys22–Cys54, and Cys40–Cys45.

This sequence belongs to the insulin family. Heterodimer of a B chain and an A chain linked by two disulfide bonds.

Its subcellular location is the secreted. In terms of biological role, relaxin is an ovarian hormone that acts with estrogen to produce dilatation of the birth canal in many mammals. This Balaenoptera edeni (Pigmy Bryde's whale) protein is Relaxin.